A 357-amino-acid chain; its full sequence is Scopoletin 8-hydroxylase (357 aa).

Residues 206–307 (MGTKMVNMNY…RVSVPIFTAP (102 aa)) enclose the Fe2OG dioxygenase domain. Tyr-216 provides a ligand contact to 2-oxoglutarate. Fe cation is bound by residues His-231, Asp-233, and His-288. 2-oxoglutarate contacts are provided by Arg-298 and Ser-300.

The protein belongs to the iron/ascorbate-dependent oxidoreductase family. L-ascorbate is required as a cofactor. The cofactor is Fe(2+). In terms of tissue distribution, expressed in both primary and lateral roots under iron-deficient conditions, except in apical root zones, and mostly in the root epidermal layer.

It carries out the reaction scopoletin + 2-oxoglutarate + O2 = fraxetin + succinate + CO2. The protein operates within phenylpropanoid metabolism. Functionally, involved in the pathway of sideretin biosynthesis from feruloyl CoA, a redox-active catecholic metabolite exuded by roots in response to iron deficiency in order to facilitate the uptake of iron; this pathway consists in the successive conversion from feruloyl CoA to scopoletin, from scopoletin to fraxetin and from fraxetin to sideretin. Catalyzes the biosynthesis of fraxetin via scopoletin hydroxylation. The protein is Scopoletin 8-hydroxylase of Arabidopsis thaliana (Mouse-ear cress).